Consider the following 829-residue polypeptide: MKRAAQASDEPLKKRKTAREESSDEDEESSQRTTSQDSSQSESLSDVEDHKPSFSRPSDSQNSQGSMAHNEASNKFAMYNNVSQKLMAKMGFREGEGLGKYGQGRKEIVEASTQRGRRGLGLMLKGFQGDLNVDWEDEPEPSAIEQVSWFPESSPEIPDSDELRDWMTIGEKKLKIDDEIEFCSENLLHLLLRCKTVFDDLEGEEMRRARTRSNPYETIRGAFFLNRAAMKMANMDHVFDYMFTNPKDSQGKVLTRDKEGELLYFGDVCAGPGGFSEYVLWRRRWHAKGFGMTLKGANDFKLEDFYAAPSELFEAYYGEGGIDGDGDITRPENISAFRNFVLDSTEGRGLHFLMADGGFSVEGQENLQEILSKQLLLCQFLTALSVVRPGGHFLCKTFDLFTPFSVGLIYLLYLCFERVSLFKPVTSRPANSERYVVCKGLKPGTDAVREYMFTINLKLNQFRHSDRDVIEVVPLDIIKGDTDFFQYMIGSNESYCAVQIKALAKIHAYVRDTTLFEARQADIRKECLKLWGIPDKARVTPSTSDPKNKFYELVKGSEMDSFNSRPTALNSVNLEKLQHVLDYRCIVGGGEQLFLLALGRSQIYTWDGKAPSRWKKLENFKMELPRDTLLSVEIVQELKGEGKAQRRINAVHVLDALVLNGTDVRDQHFNQRIQMVEKFVKAVSKPSRPDMNPIRVKEVYRLEEMEKIFVRLEMKITKSSGGMPRLSYTGRDDRHFLPTGLYIIKTVNDPWTMAFSKSSKRKFFYNKQTKESTYDLPATSVAPFYVCHQDRLFWAWEEGVRVHDSQTRINPDKLSKDDVVSFIHKHYQQ.

A disordered region spans residues 1-68 (MKRAAQASDE…DSQNSQGSMA (68 aa)). Residues 2 to 16 (KRAAQASDEPLKKRK) carry the Bipartite nuclear localization signal motif. A compositionally biased stretch (low complexity) spans 31 to 44 (QRTTSQDSSQSESL). Over residues 55–68 (SRPSDSQNSQGSMA) the composition is skewed to polar residues. One can recognise a G-patch domain in the interval 79–125 (YNNVSQKLMAKMGFREGEGLGKYGQGRKEIVEASTQRGRRGLGLMLK). Substrate-binding positions include 195–199 (KTVFD) and Arg210. The region spanning 223-442 (FFLNRAAMKM…ERYVVCKGLK (220 aa)) is the RrmJ-type SAM-dependent 2'-O-MTase domain. Asn226 provides a ligand contact to S-adenosyl-L-methionine. Residue Lys231 is part of the active site. S-adenosyl-L-methionine contacts are provided by residues 269 to 275 (CAGPGGF) and 327 to 328 (DI). Residue Asp356 is part of the active site. Substrate is bound at residue 366–368 (NLQ). Lys396 serves as the catalytic Proton acceptor. Asn431 serves as a coordination point for substrate. One can recognise a WW domain in the interval 745 to 779 (KTVNDPWTMAFSKSSKRKFFYNKQTKESTYDLPAT).

The protein localises to the nucleus. It carries out the reaction a 5'-end (N(7)-methyl 5'-triphosphoguanosine)-ribonucleoside in mRNA + S-adenosyl-L-methionine = a 5'-end (N(7)-methyl 5'-triphosphoguanosine)-(2'-O-methyl-ribonucleoside) in mRNA + S-adenosyl-L-homocysteine + H(+). Functionally, S-adenosyl-L-methionine-dependent methyltransferase that mediates mRNA cap1 2'-O-ribose methylation to the 5'-cap structure of mRNAs. Methylates the ribose of the first nucleotide of a m(7)GpppG-capped mRNA and small nuclear RNA (snRNA) to produce m(7)GpppRm (cap1). Displays a preference for cap0 transcripts. Cap1 modification is linked to higher levels of translation. May be involved in the interferon response pathway. The protein is Cap-specific mRNA (nucleoside-2'-O-)-methyltransferase 1 (cmtr1) of Danio rerio (Zebrafish).